The following is a 209-amino-acid chain: Casparian strip membrane protein 1 (209 aa).

Residues 1–46 (MEKSESTKIDVVETNKERKGKAPLLGKAPVVAAAVVHAKGGGAKRG) lie on the Cytoplasmic side of the membrane. The helical transmembrane segment at 47–67 (IAIFDLILRIAAFASALGAAV) threads the bilayer. Residues 68–96 (AMATTEETLPFFTQFFQFEASYDDLPTFT) lie on the Extracellular side of the membrane. A helical membrane pass occupies residues 97 to 117 (FFVVAMAIVVAYLVLSVPFSI). The Cytoplasmic segment spans residues 118–129 (VCIVRPHAVVPR). Residues 130 to 150 (LLLIIFDTVIIALTTGAAGSS) traverse the membrane as a helical segment. The Extracellular segment spans residues 151–179 (AAIVYLAHNGNQDANWLAICQQFGDFCQR). Residues 180 to 200 (VSGAVVAAFVTVVILIFLVVL) form a helical membrane-spanning segment. Over 201-209 (SASALRRHH) the chain is Cytoplasmic.

The protein belongs to the Casparian strip membrane proteins (CASP) family. As to quaternary structure, homodimer and heterodimers.

It is found in the cell membrane. In terms of biological role, regulates membrane-cell wall junctions and localized cell wall deposition. Required for establishment of the Casparian strip membrane domain (CSD) and the subsequent formation of Casparian strips, a cell wall modification of the root endodermis that determines an apoplastic barrier between the intraorganismal apoplasm and the extraorganismal apoplasm and prevents lateral diffusion. This chain is Casparian strip membrane protein 1, found in Nicotiana tabacum (Common tobacco).